The following is a 369-amino-acid chain: Leucine-specific-binding protein (369 aa).

The signal sequence occupies residues 1–23 (MKRKAKTIIAGIVALAVSQGAMA). C76 and C101 form a disulfide bridge.

It belongs to the leucine-binding protein family.

The protein resides in the periplasm. This protein is a component of the leucine-specific transport system, which is one of the two periplasmic binding protein-dependent transport systems of the high-affinity transport of the branched-chain amino acids. This Salmonella typhi protein is Leucine-specific-binding protein (livK).